Consider the following 84-residue polypeptide: Small ribosomal subunit protein uS17 (84 aa).

This sequence belongs to the universal ribosomal protein uS17 family. Part of the 30S ribosomal subunit.

One of the primary rRNA binding proteins, it binds specifically to the 5'-end of 16S ribosomal RNA. The polypeptide is Small ribosomal subunit protein uS17 (Vibrio atlanticus (strain LGP32) (Vibrio splendidus (strain Mel32))).